A 157-amino-acid polypeptide reads, in one-letter code: Protein Smg homolog (157 aa).

This sequence belongs to the Smg family.

This chain is Protein Smg homolog, found in Tolumonas auensis (strain DSM 9187 / NBRC 110442 / TA 4).